Reading from the N-terminus, the 475-residue chain is Bifunctional protein HldE (475 aa).

Residues 1–318 are ribokinase; that stretch reads MKITLPEFGK…ANALYTEQET (318 aa). ATP is bound at residue 195-198; that stretch reads NMSE. Aspartate 264 is a catalytic residue. The tract at residues 344-475 is cytidylyltransferase; it reads MTNGCFDILH…DIIKTIRERG (132 aa).

It in the N-terminal section; belongs to the carbohydrate kinase PfkB family. In the C-terminal section; belongs to the cytidylyltransferase family. In terms of assembly, homodimer.

It carries out the reaction D-glycero-beta-D-manno-heptose 7-phosphate + ATP = D-glycero-beta-D-manno-heptose 1,7-bisphosphate + ADP + H(+). The catalysed reaction is D-glycero-beta-D-manno-heptose 1-phosphate + ATP + H(+) = ADP-D-glycero-beta-D-manno-heptose + diphosphate. It functions in the pathway nucleotide-sugar biosynthesis; ADP-L-glycero-beta-D-manno-heptose biosynthesis; ADP-L-glycero-beta-D-manno-heptose from D-glycero-beta-D-manno-heptose 7-phosphate: step 1/4. The protein operates within nucleotide-sugar biosynthesis; ADP-L-glycero-beta-D-manno-heptose biosynthesis; ADP-L-glycero-beta-D-manno-heptose from D-glycero-beta-D-manno-heptose 7-phosphate: step 3/4. Its function is as follows. Catalyzes the phosphorylation of D-glycero-D-manno-heptose 7-phosphate at the C-1 position to selectively form D-glycero-beta-D-manno-heptose-1,7-bisphosphate. Catalyzes the ADP transfer from ATP to D-glycero-beta-D-manno-heptose 1-phosphate, yielding ADP-D-glycero-beta-D-manno-heptose. The sequence is that of Bifunctional protein HldE from Aeromonas salmonicida (strain A449).